The chain runs to 175 residues: ATP synthase subunit delta (175 aa).

Belongs to the ATPase delta chain family. As to quaternary structure, F-type ATPases have 2 components, F(1) - the catalytic core - and F(0) - the membrane proton channel. F(1) has five subunits: alpha(3), beta(3), gamma(1), delta(1), epsilon(1). F(0) has three main subunits: a(1), b(2) and c(10-14). The alpha and beta chains form an alternating ring which encloses part of the gamma chain. F(1) is attached to F(0) by a central stalk formed by the gamma and epsilon chains, while a peripheral stalk is formed by the delta and b chains.

Its subcellular location is the cell membrane. Functionally, f(1)F(0) ATP synthase produces ATP from ADP in the presence of a proton or sodium gradient. F-type ATPases consist of two structural domains, F(1) containing the extramembraneous catalytic core and F(0) containing the membrane proton channel, linked together by a central stalk and a peripheral stalk. During catalysis, ATP synthesis in the catalytic domain of F(1) is coupled via a rotary mechanism of the central stalk subunits to proton translocation. This protein is part of the stalk that links CF(0) to CF(1). It either transmits conformational changes from CF(0) to CF(1) or is implicated in proton conduction. This is ATP synthase subunit delta from Lactococcus lactis subsp. lactis (strain IL1403) (Streptococcus lactis).